Here is a 499-residue protein sequence, read N- to C-terminus: Probable cytosol aminopeptidase (499 aa).

Residues K269 and D274 each contribute to the Mn(2+) site. K281 is a catalytic residue. Mn(2+)-binding residues include D292, D351, and E353. R355 is an active-site residue.

This sequence belongs to the peptidase M17 family. Mn(2+) is required as a cofactor.

It localises to the cytoplasm. It carries out the reaction Release of an N-terminal amino acid, Xaa-|-Yaa-, in which Xaa is preferably Leu, but may be other amino acids including Pro although not Arg or Lys, and Yaa may be Pro. Amino acid amides and methyl esters are also readily hydrolyzed, but rates on arylamides are exceedingly low.. It catalyses the reaction Release of an N-terminal amino acid, preferentially leucine, but not glutamic or aspartic acids.. Its function is as follows. Presumably involved in the processing and regular turnover of intracellular proteins. Catalyzes the removal of unsubstituted N-terminal amino acids from various peptides. The chain is Probable cytosol aminopeptidase from Haemophilus ducreyi (strain 35000HP / ATCC 700724).